The sequence spans 509 residues: UDP-N-acetylmuramyl-tripeptide synthetase (509 aa).

Residue S30 coordinates UDP-N-acetyl-alpha-D-muramoyl-L-alanyl-D-glutamate. Residue 111-117 coordinates ATP; that stretch reads GTDGKTT. Residues 155–156, T182, and R192 contribute to the UDP-N-acetyl-alpha-D-muramoyl-L-alanyl-D-glutamate site; that span reads ST. K224 carries the post-translational modification N6-carboxylysine.

It belongs to the MurCDEF family. MurE subfamily. Carboxylation is probably crucial for Mg(2+) binding and, consequently, for the gamma-phosphate positioning of ATP.

It is found in the cytoplasm. It participates in cell wall biogenesis; peptidoglycan biosynthesis. Its function is as follows. Catalyzes the addition of an amino acid to the nucleotide precursor UDP-N-acetylmuramoyl-L-alanyl-D-glutamate (UMAG) in the biosynthesis of bacterial cell-wall peptidoglycan. This Roseiflexus sp. (strain RS-1) protein is UDP-N-acetylmuramyl-tripeptide synthetase.